Consider the following 370-residue polypeptide: GTPase Obg (370 aa).

The Obg domain occupies 1–159 (MKFIDEARIE…RMLKLELKVL (159 aa)). Residues 128–147 (LHFKSSTNRAPRQKTDGKPG) form a disordered region. Residues 160–334 (ADVGLLGMPN…LCYAIYDYLS (175 aa)) enclose the OBG-type G domain. GTP contacts are provided by residues 166–173 (GMPNAGKS), 191–195 (FTTLA), 213–216 (DIPG), 284–287 (NKLD), and 315–317 (SAL). Residues Ser173 and Thr193 each contribute to the Mg(2+) site.

Belongs to the TRAFAC class OBG-HflX-like GTPase superfamily. OBG GTPase family. In terms of assembly, monomer. It depends on Mg(2+) as a cofactor.

It localises to the cytoplasm. In terms of biological role, an essential GTPase which binds GTP, GDP and possibly (p)ppGpp with moderate affinity, with high nucleotide exchange rates and a fairly low GTP hydrolysis rate. Plays a role in control of the cell cycle, stress response, ribosome biogenesis and in those bacteria that undergo differentiation, in morphogenesis control. This chain is GTPase Obg, found in Burkholderia cenocepacia (strain ATCC BAA-245 / DSM 16553 / LMG 16656 / NCTC 13227 / J2315 / CF5610) (Burkholderia cepacia (strain J2315)).